The following is a 487-amino-acid chain: Zinc finger and BTB domain-containing protein 32 (487 aa).

The BTB domain occupies 29–87 (CDTLITVGSQEFPAHSLVLAGVSQQLGRRGQWALGEGISPSTFAQLLNFVYGESVELQP). The span at 112-166 (ARGDRAKKPDPGLKKHQEEPEKPSRNPERELGDPGEKQKPEQVSRTGGREQEMLH) shows a compositional bias: basic and acidic residues. Disordered regions lie at residues 112–244 (ARGD…TSVT) and 308–371 (QNQL…ARSR). Polar residues predominate over residues 308-320 (QNQLASSSPTPGS). The segment covering 357–369 (PPRPHPPPAPPAR) has biased composition (pro residues). C2H2-type zinc fingers lie at residues 373-395 (YACSVCGKRFSLKHQMETHYRVH), 401-423 (FSCSLCPQRSRDFSAMTKHLRTH), and 428-450 (YRCSLCGAGCPSLASMQAHMRGH). Residues 468–487 (SSSRPSRPSTSPCCPSSSTT) are disordered.

The protein belongs to the krueppel C2H2-type zinc-finger protein family. Homodimer (via PTB domain). Interacts with the N-terminal of FANCC. Interacts with ZBTB16. Interacts with GATA3. In terms of tissue distribution, predominantly expressed in testis. Some isoforms are ubiquitously expressed.

The protein localises to the nucleus. DNA-binding protein that binds to the to a 5'-TGTACAGTGT-3' core sequence. May function as a transcriptional transactivator and transcriptional repressor. Probably exerts its repressor effect by preventing GATA3 from binding to DNA. May play a role in regulating the differentiation and activation of helper T-cells. This chain is Zinc finger and BTB domain-containing protein 32 (ZBTB32), found in Homo sapiens (Human).